The primary structure comprises 780 residues: ATP-dependent 6-phosphofructokinase, liver type (780 aa).

N-acetylalanine is present on Ala2. The segment at 2 to 390 is N-terminal catalytic PFK domain 1; it reads AAVDLEKLRA…NWNIYKLLAH (389 aa). ATP-binding positions include Gly25, 88 to 89, and 118 to 121; these read RC and GDGS. Asp119 serves as a coordination point for Mg(2+). Residues 164-166, Arg201, 208-210, Glu264, Arg292, and 298-301 each bind substrate; these read SID, MGR, and HVQR. Catalysis depends on Asp166, which acts as the Proton acceptor. Ser377 is subject to Phosphoserine. Residues 391-400 are interdomain linker; that stretch reads QKPPKEKSNF. A C-terminal regulatory PFK domain 2 region spans residues 401–780; sequence SLAILNVGAP…RRTLSMDKGF (380 aa). Residues Arg470, 527-531, Arg565, 572-574, and Glu628 each bind beta-D-fructose 2,6-bisphosphate; these read TISNN and MGG. O-linked (GlcNAc) serine glycosylation is present at Ser529. Residue Tyr640 is modified to Phosphotyrosine. Residues Arg654, 660-663, and Arg734 contribute to the beta-D-fructose 2,6-bisphosphate site; that span reads HLQQ. A Phosphoserine modification is found at Ser775.

It belongs to the phosphofructokinase type A (PFKA) family. ATP-dependent PFK group I subfamily. Eukaryotic two domain clade 'E' sub-subfamily. As to quaternary structure, homo- and heterotetramers. Phosphofructokinase (PFK) enzyme functions as a tetramer composed of different combinations of 3 types of subunits, called PFKM (where M stands for Muscle), PFKL (Liver) and PFKP (Platelet). The composition of the PFK tetramer differs according to the tissue type it is present in. In muscles, it is composed of 4 PFKM subunits (also called M4). In the liver, the predominant form is a tetramer of PFKL subunits (L4). In erythrocytes, both PFKM and PFKL subunits randomly tetramerize to form M4, L4 and other combinations (ML3, M2L2, M3L). The kinetic and regulatory properties of the tetrameric enzyme are dependent on the subunit composition, hence can vary across tissues. It depends on Mg(2+) as a cofactor. In terms of processing, glcNAcylation at Ser-529 by OGT decreases enzyme activity, leading to redirect glucose flux through the oxidative pentose phosphate pathway. Glycosylation is stimulated by both hypoxia and glucose deprivation.

The protein resides in the cytoplasm. It carries out the reaction beta-D-fructose 6-phosphate + ATP = beta-D-fructose 1,6-bisphosphate + ADP + H(+). Its pathway is carbohydrate degradation; glycolysis; D-glyceraldehyde 3-phosphate and glycerone phosphate from D-glucose: step 3/4. Allosterically activated by ADP, AMP, or fructose 2,6-bisphosphate, and allosterically inhibited by ATP or citrate. GlcNAcylation by OGT overcomes allosteric regulation. Functionally, catalyzes the phosphorylation of D-fructose 6-phosphate to fructose 1,6-bisphosphate by ATP, the first committing step of glycolysis. Negatively regulates the phagocyte oxidative burst in response to bacterial infection by controlling cellular NADPH biosynthesis and NADPH oxidase-derived reactive oxygen species. Upon macrophage activation, drives the metabolic switch toward glycolysis, thus preventing glucose turnover that produces NADPH via pentose phosphate pathway. In Homo sapiens (Human), this protein is ATP-dependent 6-phosphofructokinase, liver type.